A 265-amino-acid polypeptide reads, in one-letter code: Isoprenyl transferase (265 aa).

Asp-35 is an active-site residue. Asp-35 is a binding site for Mg(2+). Residues 36-39 (GNGR), Trp-40, Arg-48, His-52, and 80-82 (SIE) each bind substrate. The Proton acceptor role is filled by Asn-83. Substrate contacts are provided by residues Trp-84, Arg-86, Arg-203, and 209-211 (RIS). Glu-222 is a binding site for Mg(2+).

It belongs to the UPP synthase family. As to quaternary structure, homodimer. It depends on Mg(2+) as a cofactor.

Catalyzes the condensation of isopentenyl diphosphate (IPP) with allylic pyrophosphates generating different type of terpenoids. The sequence is that of Isoprenyl transferase from Chlorobaculum tepidum (strain ATCC 49652 / DSM 12025 / NBRC 103806 / TLS) (Chlorobium tepidum).